Reading from the N-terminus, the 824-residue chain is Dapper 1 (824 aa).

Disordered regions lie at residues 1-34 (MKPIPATPDHLGQHQESPRRKDKGEAESERQRTR), 61-80 (ALTPGAPTHGDTATRAGDTP), 131-150 (EEHLETDSRPSSGFYELSDG), 454-487 (TSNVQKENVTPNAPTNLSNASSSACNGSPRESTQ), and 516-536 (ASSSFDERPPLDFKSEGSSSQ). The segment at 2–343 (KPIPATPDHL…PVRTNKPRTS (342 aa)) is interaction with tcf7l1. A compositionally biased stretch (basic and acidic residues) spans 11–34 (LGQHQESPRRKDKGEAESERQRTR). The stretch at 19–47 (RRKDKGEAESERQRTRERLEATLAGLAEL) forms a coiled coil. Positions 520–530 (FDERPPLDFKS) are enriched in basic and acidic residues. The PDZ-binding motif lies at 821 to 824 (MTTV).

Belongs to the dapper family. In terms of assembly, interacts with dbf4, dvl2 and tcf7l1.

The protein resides in the cytoplasm. The protein localises to the nucleus. Involved in regulation of intracellular signaling pathways during development. Specifically thought to play a role in canonical and/or non-canonical Wnt signaling pathways through interaction with DSH (Dishevelled) family proteins. Binds to dvl2 and regulates the degradation of ctnnb1/beta-catenin, thereby modulating the transcriptional activation of target genes of the Wnt signaling pathway. May also bind to and directly stimulate the activity of tcf7l1. The polypeptide is Dapper 1 (dact1) (Xenopus tropicalis (Western clawed frog)).